Consider the following 382-residue polypeptide: Galactokinase (382 aa).

34–37 (EHTD) contributes to the substrate binding site. ATP is bound at residue 124–130 (GAGLSSS). Mg(2+) is bound by residues Ser130 and Glu162. Catalysis depends on Asp174, which acts as the Proton acceptor. Residue Tyr223 participates in substrate binding.

Belongs to the GHMP kinase family. GalK subfamily.

The protein resides in the cytoplasm. It carries out the reaction alpha-D-galactose + ATP = alpha-D-galactose 1-phosphate + ADP + H(+). Its pathway is carbohydrate metabolism; galactose metabolism. Functionally, catalyzes the transfer of the gamma-phosphate of ATP to D-galactose to form alpha-D-galactose-1-phosphate (Gal-1-P). This is Galactokinase from Salmonella paratyphi A (strain ATCC 9150 / SARB42).